Consider the following 206-residue polypeptide: Regulatory protein CysR (206 aa).

Positions 120 to 196 (RRAEAKLASL…DRALIVRYPE (77 aa)) constitute an HTH crp-type domain. A DNA-binding region (H-T-H motif) is located at residues 156-175 (HQVIAELSGSTRVTTTRLLG).

The protein resides in the cytoplasm. Probably regulates the expression of genes from the sulfate permease complex. The protein is Regulatory protein CysR (cysR) of Synechococcus elongatus (strain ATCC 33912 / PCC 7942 / FACHB-805) (Anacystis nidulans R2).